The chain runs to 815 residues: Probable beta-glucosidase G (815 aa).

An N-terminal signal peptide occupies residues 1-20; the sequence is MASIAHLVVSGLLAATAVNG. Asn40, Asn58, Asn229, and Asn276 each carry an N-linked (GlcNAc...) asparagine glycan. The active site involves Asp304. 9 N-linked (GlcNAc...) asparagine glycosylation sites follow: Asn343, Asn350, Asn402, Asn507, Asn563, Asn584, Asn623, Asn662, and Asn715.

The protein belongs to the glycosyl hydrolase 3 family.

It localises to the secreted. The enzyme catalyses Hydrolysis of terminal, non-reducing beta-D-glucosyl residues with release of beta-D-glucose.. Its pathway is glycan metabolism; cellulose degradation. Functionally, beta-glucosidases are one of a number of cellulolytic enzymes involved in the degradation of cellulosic biomass. Catalyzes the last step releasing glucose from the inhibitory cellobiose. In Aspergillus flavus (strain ATCC 200026 / FGSC A1120 / IAM 13836 / NRRL 3357 / JCM 12722 / SRRC 167), this protein is Probable beta-glucosidase G (bglG).